The primary structure comprises 197 residues: TLE family member 5 (197 aa).

The tract at residues 166–197 (LSALGSQTHLSKEDKNGHDGDTHQEDDGEKSD) is CCN domain. Residues 170–197 (GSQTHLSKEDKNGHDGDTHQEDDGEKSD) form a disordered region. Over residues 175–197 (LSKEDKNGHDGDTHQEDDGEKSD) the composition is skewed to basic and acidic residues. The residue at position 196 (Ser196) is a Phosphoserine.

Belongs to the WD repeat Groucho/TLE family. Homooligomer and heterooligomer with other family members. Binds TCF7 and the NF-kappa-B subunit RELA. Interacts with PHF12. Interacts (via Q domain) with SIX3. Interacts with SIX6. In terms of processing, ubiquitinated by XIAP/BIRC4. Ubiquitously expressed in developing embryos by midgestation, a wide expression is conserved in adult. In mouse, abundantly expressed in muscle, heart and brain.

It is found in the nucleus. Functionally, transcriptional corepressor. Acts as a dominant repressor towards other family members. Inhibits NF-kappa-B-regulated gene expression. May be required for the initiation and maintenance of the differentiated state. Essential for the transcriptional repressor activity of SIX3 during retina and lens development. The protein is TLE family member 5 of Mus musculus (Mouse).